The primary structure comprises 765 residues: Palmitoyltransferase ZDHHC8 (765 aa).

Over 1–13 the chain is Cytoplasmic; that stretch reads MPRSPGTRLKPAK. The chain crosses the membrane as a helical span at residues 14–34; sequence YIPVATAAALLVGSSTLFFVF. Residues 35–52 are Lumenal-facing; the sequence is TCPWLTRAVSPAVPVYNG. Residues 53–73 form a helical membrane-spanning segment; the sequence is IIFLFVLANFSMATFMDPGVF. Residues 74–148 lie on the Cytoplasmic side of the membrane; it reads PRADEDEDKE…NCIGRRNYRY (75 aa). One can recognise a DHHC domain in the interval 104–154; it reads KWCATCHFYRPPRCSHCSVCDNCVEDFDHHCPWVNNCIGRRNYRYFFLFLL. Cysteine 134 (S-palmitoyl cysteine intermediate) is an active-site residue. The helical transmembrane segment at 149-169 threads the bilayer; the sequence is FFLFLLSLSAHMVGVVAFGLV. The Lumenal portion of the chain corresponds to 170 to 190; that stretch reads YVLNHAEGLGAAHTTITMAVM. Residues 191–211 traverse the membrane as a helical segment; sequence CVAGLFFIPVIGLTGFHVVLV. The Cytoplasmic segment spans residues 212–765; sequence TRGRTTNEHV…VGGTTYEISV (554 aa). The disordered stretch occupies residues 290–386; sequence LKAGLGRSKS…PGPDSLTLGE (97 aa). Positions 301-311 are enriched in basic and acidic residues; that stretch reads GSLDRLDEKPL. A compositionally biased stretch (polar residues) spans 333–348; it reads PRPSSAESALSAQRTS. Serine 337 bears the Phosphoserine mark. Arginine 441 is modified (omega-N-methylarginine). The interval 447-542 is disordered; sequence ALQPLRSEGG…PREPSPVRYD (96 aa). 2 positions are modified to phosphoserine: serine 606 and serine 627. Residues 630–747 are disordered; that stretch reads SLSSAVSRAP…PGPSASPARH (118 aa). A compositionally biased stretch (polar residues) spans 639–655; sequence PRTSSSSLQADLANNNA. The segment covering 671-680 has biased composition (pro residues); sequence QGPPSPPSTP. Phosphoserine occurs at positions 675, 682, 725, and 743.

The protein belongs to the DHHC palmitoyltransferase family. ERF2/ZDHHC9 subfamily.

The protein localises to the golgi apparatus membrane. The protein resides in the mitochondrion membrane. The enzyme catalyses L-cysteinyl-[protein] + hexadecanoyl-CoA = S-hexadecanoyl-L-cysteinyl-[protein] + CoA. Functionally, palmitoyltransferase that catalyzes the addition of palmitate onto various protein substrates and therefore functions in several unrelated biological processes. Through the palmitoylation of ABCA1 regulates the localization of the transporter to the plasma membrane and thereby regulates its function in cholesterol and phospholipid efflux. Could also pamitoylate the D(2) dopamine receptor DRD2 and regulate its stability and localization to the plasma membrane. Could also play a role in glutamatergic transmission. The sequence is that of Palmitoyltransferase ZDHHC8 from Canis lupus familiaris (Dog).